The following is a 176-amino-acid chain: NAD(P)H-quinone oxidoreductase subunit 6, chloroplastic (176 aa).

5 consecutive transmembrane segments (helical) span residues Phe-10–Thr-30, Pro-32–Leu-52, Ala-61–Met-81, Leu-92–Met-112, and Phe-152–Ala-172.

The protein belongs to the complex I subunit 6 family. NDH is composed of at least 16 different subunits, 5 of which are encoded in the nucleus.

The protein resides in the plastid. It is found in the chloroplast thylakoid membrane. The catalysed reaction is a plastoquinone + NADH + (n+1) H(+)(in) = a plastoquinol + NAD(+) + n H(+)(out). It carries out the reaction a plastoquinone + NADPH + (n+1) H(+)(in) = a plastoquinol + NADP(+) + n H(+)(out). Its function is as follows. NDH shuttles electrons from NAD(P)H:plastoquinone, via FMN and iron-sulfur (Fe-S) centers, to quinones in the photosynthetic chain and possibly in a chloroplast respiratory chain. The immediate electron acceptor for the enzyme in this species is believed to be plastoquinone. Couples the redox reaction to proton translocation, and thus conserves the redox energy in a proton gradient. The chain is NAD(P)H-quinone oxidoreductase subunit 6, chloroplastic (ndhG) from Eucalyptus globulus subsp. globulus (Tasmanian blue gum).